The primary structure comprises 73 residues: Large ribosomal subunit protein bL31 (73 aa).

Positions 16, 18, 36, and 39 each coordinate Zn(2+).

The protein belongs to the bacterial ribosomal protein bL31 family. Type A subfamily. Part of the 50S ribosomal subunit. Zn(2+) serves as cofactor.

In terms of biological role, binds the 23S rRNA. This chain is Large ribosomal subunit protein bL31, found in Myxococcus xanthus (strain DK1622).